Reading from the N-terminus, the 304-residue chain is D-alanine--D-alanine ligase (304 aa).

Residues 107-300 (KRLWQGSGLP…FDELVARILG (194 aa)) form the ATP-grasp domain. 134–186 (VGYPVIVKPAREGSSLGMSRVEGPEELAEAYRVAAAYDDTVLAEAWVEGEEYT) contacts ATP. Mg(2+) is bound by residues Asp254, Glu267, and Asn269.

Belongs to the D-alanine--D-alanine ligase family. It depends on Mg(2+) as a cofactor. Requires Mn(2+) as cofactor.

The protein localises to the cytoplasm. It catalyses the reaction 2 D-alanine + ATP = D-alanyl-D-alanine + ADP + phosphate + H(+). The protein operates within cell wall biogenesis; peptidoglycan biosynthesis. Functionally, cell wall formation. In Halorhodospira halophila (strain DSM 244 / SL1) (Ectothiorhodospira halophila (strain DSM 244 / SL1)), this protein is D-alanine--D-alanine ligase.